A 454-amino-acid polypeptide reads, in one-letter code: Protein odr-4 homolog (454 aa).

A run of 2 helical transmembrane segments spans residues 82-102 (MLPGGLLVLGVFIITTLELAN) and 432-452 (IGVIAAFTVAVLAAGISFHYF).

It belongs to the ODR-4 family.

It is found in the membrane. In terms of biological role, may play a role in the trafficking of a subset of G-protein coupled receptors. The sequence is that of Protein odr-4 homolog (ODR4) from Pongo abelii (Sumatran orangutan).